Reading from the N-terminus, the 521-residue chain is Major capsid protein (521 aa).

Belongs to the Tevenvirinae major capsid protein family. Homohexamer. Interacts with the portal protein. Interacts with the capsid vertex protein that forms pentamers. Interacts with hoc; one hoc molecule associates with each capsid hexamer. Interacts with soc; this interaction reinforces the capsid structure. A total of 960 subunits of the major capsid protein forms the 160 hexamers. In terms of processing, a proteolytic cleavage by the prohead core protein protease gives rise to the mature major capsid protein during virus maturation.

It localises to the virion. In terms of biological role, major capsid protein that self-associates to form hexamers, building most of the capsid in association with pentons made of the capsid vertex protein and one dodecamer of the portal protein. The major capsid protein self-associates to form 160 hexamers, building most of the T=13 laevo capsid. Folding of major capsid protein requires the assistance of two chaperones, the host chaperone groL acting with the phage encoded gp23-specific chaperone, gp31. The capsid also contains two nonessential outer capsid proteins, Hoc and Soc, which decorate the capsid surface. Through binding to adjacent gp23 subunits, Soc reinforces the capsid structure. The sequence is that of Major capsid protein (gp23) from Escherichia coli (Bacteriophage T4).